The sequence spans 478 residues: H(+)/Cl(-) exchange transporter ClcA (478 aa).

The Cytoplasmic portion of the chain corresponds to 1-32 (MTHSTQQLSPEGVAEGKRGRLIRELVNRDKTP). A helical transmembrane segment spans residues 33–69 (LIILIMAAVVGVVTGLLGVAFDRGVDWVQQQRLLALA). Over 70 to 76 (NVADYAL) the chain is Periplasmic. Residues 77 to 100 (LVWPLAFIMSALLAMMGYFLVSRF) traverse the membrane as a helical segment. The Selectivity filter part_1 motif lies at 106–110 (GSGIP). Serine 107 is a binding site for chloride. The helical intramembrane region spans 109-116 (IPEIEGAM). Residues 117-123 (EEMRPVR) are Cytoplasmic-facing. The next 2 helical transmembrane spans lie at 124–141 (WWRVIPVKFIGGLGTLGA) and 148–166 (EGPMVQMGGNSGRMIVDIF). The Selectivity filter part_2 motif lies at 146 to 150 (GREGP). Over 167-176 (RLRSPEARHS) the chain is Cytoplasmic. 2 intramembrane regions (helical) span residues 177–189 (LLATGAAAGLSAA) and 193–201 (PLAGILFVI). Topologically, residues 202-214 (EEMRSQFRYSLVS) are cytoplasmic. Residues 215–232 (IKAVFIGVITSTIVYRYF) form a helical membrane-spanning segment. The Periplasmic portion of the chain corresponds to 233–252 (NGERAIIEVGKLSDAPLNTL). Residues 253 to 281 (WLYLLLGIIFGAVGVIFNALIFRTQDMFV) form a helical membrane-spanning segment. Residues 282 to 287 (RFHGGD) are Cytoplasmic-facing. Residues 288-309 (WRKLVLIGGLLGGMCGLLALLH) form a helical membrane-spanning segment. Residues 310–329 (GNAVGGGFALIPIAAAGNFS) lie on the Periplasmic side of the membrane. A run of 2 helical transmembrane segments spans residues 330–349 (IGMLLFIFIARVITTLLCFG) and 355–376 (GIFAPMLALGTILGTAFGLSCA). A Selectivity filter part_3 motif is present at residues 355–359 (GIFAP). 2 residues coordinate chloride: isoleucine 356 and phenylalanine 357. The Periplasmic segment spans residues 377–386 (HFFPQYGIEA). The segment at residues 387 to 401 (GTFAIAGMGALFAAS) is an intramembrane region (helical). The note=Loop between two helices intramembrane region spans 402 to 404 (VRA). The segment at residues 405–416 (PLTGIVLVLEMT) is an intramembrane region (helical). An intramembrane region (note=Loop between two helices) is located at residues 417 to 421 (DNYQL). Residues 422 to 438 (ILPMIVTCLGATLIAQF) form a helical membrane-spanning segment. At 439 to 478 (MGGKPLYSAILARTLAKQEQARATVIAQEPAVENTPQIGK) the chain is on the cytoplasmic side. Residue tyrosine 445 coordinates chloride.

It belongs to the chloride channel (TC 2.A.49) family. ClcA subfamily. As to quaternary structure, homodimer.

It is found in the cell inner membrane. It carries out the reaction 2 chloride(in) + H(+)(out) = 2 chloride(out) + H(+)(in). Functionally, proton-coupled chloride transporter. Functions as antiport system and exchanges two chloride ions for 1 proton. Probably acts as an electrical shunt for an outwardly-directed proton pump that is linked to amino acid decarboxylation, as part of the extreme acid resistance (XAR) response. This Yersinia pestis bv. Antiqua (strain Antiqua) protein is H(+)/Cl(-) exchange transporter ClcA.